Reading from the N-terminus, the 179-residue chain is Large ribosomal subunit protein uL6 (179 aa).

The span at 154 to 169 (EPYKGKGVKYEHEQIR) shows a compositional bias: basic and acidic residues. Residues 154 to 179 (EPYKGKGVKYEHEQIRRKAGKSGGKK) form a disordered region. A compositionally biased stretch (basic residues) spans 170 to 179 (RKAGKSGGKK).

It belongs to the universal ribosomal protein uL6 family. In terms of assembly, part of the 50S ribosomal subunit.

Its function is as follows. This protein binds to the 23S rRNA, and is important in its secondary structure. It is located near the subunit interface in the base of the L7/L12 stalk, and near the tRNA binding site of the peptidyltransferase center. The protein is Large ribosomal subunit protein uL6 of Oleidesulfovibrio alaskensis (strain ATCC BAA-1058 / DSM 17464 / G20) (Desulfovibrio alaskensis).